We begin with the raw amino-acid sequence, 188 residues long: GTP cyclohydrolase 1 (188 aa).

Positions 78, 81, and 150 each coordinate Zn(2+).

The protein belongs to the GTP cyclohydrolase I family. Toroid-shaped homodecamer, composed of two pentamers of five dimers.

It catalyses the reaction GTP + H2O = 7,8-dihydroneopterin 3'-triphosphate + formate + H(+). Its pathway is cofactor biosynthesis; 7,8-dihydroneopterin triphosphate biosynthesis; 7,8-dihydroneopterin triphosphate from GTP: step 1/1. The polypeptide is GTP cyclohydrolase 1 (Geobacillus kaustophilus (strain HTA426)).